The following is a 56-amino-acid chain: uncharacterized protein (56 aa).

The chain crosses the membrane as a helical span at residues glycine 12–glycine 32. Residues phenylalanine 19–valine 31 form a hydrophobic region.

Its subcellular location is the membrane. This is an uncharacterized protein from Chenopodium amaranticolor (Quinoa).